Here is a 179-residue protein sequence, read N- to C-terminus: Adenine phosphoribosyltransferase (179 aa).

The protein belongs to the purine/pyrimidine phosphoribosyltransferase family. In terms of assembly, homodimer.

It is found in the cytoplasm. The catalysed reaction is AMP + diphosphate = 5-phospho-alpha-D-ribose 1-diphosphate + adenine. It functions in the pathway purine metabolism; AMP biosynthesis via salvage pathway; AMP from adenine: step 1/1. Catalyzes a salvage reaction resulting in the formation of AMP, that is energically less costly than de novo synthesis. This is Adenine phosphoribosyltransferase from Helicobacter pylori (strain J99 / ATCC 700824) (Campylobacter pylori J99).